The sequence spans 633 residues: DNA mismatch repair protein MutL (633 aa).

The protein belongs to the DNA mismatch repair MutL/HexB family.

Functionally, this protein is involved in the repair of mismatches in DNA. It is required for dam-dependent methyl-directed DNA mismatch repair. May act as a 'molecular matchmaker', a protein that promotes the formation of a stable complex between two or more DNA-binding proteins in an ATP-dependent manner without itself being part of a final effector complex. The protein is DNA mismatch repair protein MutL of Bacillus pumilus (strain SAFR-032).